A 918-amino-acid polypeptide reads, in one-letter code: Cap-specific mRNA (nucleoside-2'-O-)-methyltransferase 1 (918 aa).

Basic and acidic residues predominate over residues 1-18 (MADRKSDEGEDEYQHKEQ). Disordered stretches follow at residues 1-56 (MADR…EERA) and 62-81 (KRGY…EEEP). Over residues 19–30 (MVTNRTSSFQPK) the composition is skewed to polar residues. A compositionally biased stretch (basic and acidic residues) spans 43–56 (RAADRREEFMEERA). A compositionally biased stretch (acidic residues) spans 68-80 (GDDEEDDFTAEEE). One can recognise a G-patch domain in the interval 86-132 (PLTVAERLMAAMGHKAGEGLGKHGQGISEPIASSTQRGRTGLGHNAG). Residues 236 to 465 (FFQNRAAMKT…ERYITCKGLR (230 aa)) form the RrmJ-type SAM-dependent 2'-O-MTase domain. The S-adenosyl-L-methionine site is built by G298 and D379. K419 acts as the Proton acceptor in catalysis.

It carries out the reaction a 5'-end (N(7)-methyl 5'-triphosphoguanosine)-ribonucleoside in mRNA + S-adenosyl-L-methionine = a 5'-end (N(7)-methyl 5'-triphosphoguanosine)-(2'-O-methyl-ribonucleoside) in mRNA + S-adenosyl-L-homocysteine + H(+). Its function is as follows. S-adenosyl-L-methionine-dependent methyltransferase that mediates mRNA cap1 2'-O-ribose methylation to the 5'-cap structure of mRNAs. Methylates the ribose of the first nucleotide of a m(7)GpppG-capped mRNA to produce m(7)GpppNmp (cap1). Cap1 modification is linked to higher levels of translation. In Caenorhabditis elegans, this protein is Cap-specific mRNA (nucleoside-2'-O-)-methyltransferase 1.